A 264-amino-acid polypeptide reads, in one-letter code: MKIAIFNNHAEHSVIIAKKLILAMKKNNVDIDDRNPDIVVSVGGDGTLLGAFQKYVDQTESVRFVGLHTGHLGFYTDWLSTELDQFVDSLIHDNGQKVSYPLLELTVVRTSGESYKFLALNEAVIKQPIGTLVADIYLGGQAFERFRGDGIAVATPTGSTAYNKANGGAVLHPSLPAIQMSEIASINNRVFRTLGSPLIVPQDQEIVMKPKSNHFLVMYDQEEIKGHNITELRFKVSEKRVHFAQYRHVDFWRRVQNAFISEIE.

D45 acts as the Proton acceptor in catalysis. NAD(+) is bound by residues 45–46 (DG), 121–122 (NE), R147, D149, A184, and Q221.

Belongs to the NAD kinase family. Requires a divalent metal cation as cofactor.

It is found in the cytoplasm. It carries out the reaction NAD(+) + ATP = ADP + NADP(+) + H(+). In terms of biological role, involved in the regulation of the intracellular balance of NAD and NADP, and is a key enzyme in the biosynthesis of NADP. Catalyzes specifically the phosphorylation on 2'-hydroxyl of the adenosine moiety of NAD to yield NADP. This chain is NAD kinase, found in Leuconostoc mesenteroides subsp. mesenteroides (strain ATCC 8293 / DSM 20343 / BCRC 11652 / CCM 1803 / JCM 6124 / NCDO 523 / NBRC 100496 / NCIMB 8023 / NCTC 12954 / NRRL B-1118 / 37Y).